The sequence spans 362 residues: Phosphoglycolate phosphatase 1B, chloroplastic (362 aa).

A chloroplast-targeting transit peptide spans 1 to 54; that stretch reads MLSRSVASAVTPVSSSSLLPNSKPIFCLKTLSGYRSSSFCGGCIRKINHKPLRM. An N-acetylthreonine modification is found at Thr55. Glu80 serves as the catalytic Nucleophile. Phosphoserine is present on Ser356.

It belongs to the HAD-like hydrolase superfamily. CbbY/CbbZ/Gph/YieH family.

The protein localises to the plastid. It localises to the chloroplast. It carries out the reaction 2-phosphoglycolate + H2O = glycolate + phosphate. Functionally, photorespiratory enzyme that dephosphorylates the 2-phosphoglycolate produced by the RuBisCO oxygenation reaction. The protein is Phosphoglycolate phosphatase 1B, chloroplastic (PGLP1B) of Arabidopsis thaliana (Mouse-ear cress).